A 529-amino-acid chain; its full sequence is T-complex protein 1 subunit beta (529 aa).

Belongs to the TCP-1 chaperonin family. Heterooligomeric complex of about 850 to 900 kDa that forms two stacked rings, 12 to 16 nm in diameter.

It is found in the cytoplasm. Functionally, molecular chaperone; assists the folding of proteins upon ATP hydrolysis. Known to play a role, in vitro, in the folding of actin and tubulin. This chain is T-complex protein 1 subunit beta (cct-2), found in Caenorhabditis elegans.